The primary structure comprises 546 residues: MTSKESICWYLANILLVTCIGYYSYKTPFTKVEESFAMQAIHDIQTYRWDLSKYDHLEFPGAVKRSFIPSLFIAVLSYIPSWFVNPLLAARWTIGYLSWESMNSVSCSISKRFGTLSGALFILFSCAQFHLVYYMSRPLSNIFGLIATNHSLSLLLKNNYYGSISILVFAAAIVRSEIALLLMCLILPLLLQRRITLSKLLLVGISSSLAAVGASFLIDSYFWGAWCWPELEAFLFNVVEGKSSDWGTSPFYYYFVRLPWLFLNPTTLLFLLISFVYIKPARLLIYVPLFFIFVYSFLGHKEWRFIIYSIPWFNAASAIGASLCFNASKFGKKIFEILRLMFFSGIIFGFIGSSFLLYVFQYAYPGGLALTRLYEIENHPQVSVHMDVYPCMTGITRFSQLPSWYYDKTEDPKMLSNSLFISQFDYLITEDPESYNDTFDVIESVNSNTKIPILPKWLSNHIPREISIRNPAQPVYILANKKARATKPAAVDDYSSFIGHKVDEIKLWPPIYRVVSPDTLLTRDYREDRLNFFIDKDRILTHITQG.

9 consecutive transmembrane segments (helical) span residues 5–25 (ESICWYLANILLVTCIGYYSY), 67–87 (FIPSLFIAVLSYIPSWFVNPL), 113–133 (FGTLSGALFILFSCAQFHLVY), 166–186 (ILVFAAAIVRSEIALLLMCLI), 200–220 (LLLVGISSSLAAVGASFLIDS), 258–278 (LPWLFLNPTTLLFLLISFVYI), 283–303 (LLIYVPLFFIFVYSFLGHKEW), 305–325 (FIIYSIPWFNAASAIGASLCF), and 340–360 (LMFFSGIIFGFIGSSFLLYVF).

This sequence belongs to the glycosyltransferase 22 family.

The protein resides in the endoplasmic reticulum membrane. The catalysed reaction is an alpha-D-Man-(1-&gt;2)-alpha-D-Man-(1-&gt;2)-alpha-D-Man-(1-&gt;3)-[alpha-D-Man-(1-&gt;2)-alpha-D-Man-(1-&gt;3)-alpha-D-Man-(1-&gt;6)]-beta-D-Man-(1-&gt;4)-beta-D-GlcNAc-(1-&gt;4)-alpha-D-GlcNAc-diphospho-di-trans,poly-cis-dolichol + a di-trans,poly-cis-dolichyl beta-D-mannosyl phosphate = an alpha-D-Man-(1-&gt;2)-alpha-D-Man-(1-&gt;2)-alpha-D-Man-(1-&gt;3)-[alpha-D-Man-(1-&gt;2)-alpha-D-Man-(1-&gt;3)-[alpha-D-Man-(1-&gt;6)]-alpha-D-Man-(1-&gt;6)]-beta-D-Man-(1-&gt;4)-beta-D-GlcNAc-(1-&gt;4)-alpha-D-GlcNAc-diphospho-di-trans,poly-cis-dolichol + a di-trans,poly-cis-dolichyl phosphate + H(+). Its pathway is protein modification; protein glycosylation. In terms of biological role, mannosyltransferase that operates in the biosynthetic pathway of dolichol-linked oligosaccharides, the glycan precursors employed in protein asparagine (N)-glycosylation. The assembly of dolichol-linked oligosaccharides begins on the cytosolic side of the endoplasmic reticulum membrane and finishes in its lumen. The sequential addition of sugars to dolichol pyrophosphate produces dolichol-linked oligosaccharides containing fourteen sugars, including two GlcNAcs, nine mannoses and three glucoses. Once assembled, the oligosaccharide is transferred from the lipid to nascent proteins by oligosaccharyltransferases. In the lumen of the endoplasmic reticulum, adds the eighth mannose residue in an alpha-1,6 linkage onto Man(7)GlcNAc(2)-PP-dolichol to produce Man(8)GlcNAc(2)-PP-dolichol. This is Probable Dol-P-Man:Man(7)GlcNAc(2)-PP-Dol alpha-1,6-mannosyltransferase (alg12) from Schizosaccharomyces pombe (strain 972 / ATCC 24843) (Fission yeast).